Reading from the N-terminus, the 207-residue chain is Large ribosomal subunit protein uL3 (207 aa).

It belongs to the universal ribosomal protein uL3 family. Part of the 50S ribosomal subunit. Forms a cluster with proteins L14 and L19.

Its function is as follows. One of the primary rRNA binding proteins, it binds directly near the 3'-end of the 23S rRNA, where it nucleates assembly of the 50S subunit. The chain is Large ribosomal subunit protein uL3 from Thermotoga maritima (strain ATCC 43589 / DSM 3109 / JCM 10099 / NBRC 100826 / MSB8).